The primary structure comprises 339 residues: Anthranilate phosphoribosyltransferase (339 aa).

5-phospho-alpha-D-ribose 1-diphosphate-binding positions include Gly-79, 82–83, Thr-87, 89–92, 107–115, and Ser-119; these read GD, NVST, and KHGNRAVSS. Residue Gly-79 coordinates anthranilate. Ser-91 is a binding site for Mg(2+). Asn-110 contacts anthranilate. Arg-165 provides a ligand contact to anthranilate. The Mg(2+) site is built by Asp-224 and Glu-225.

This sequence belongs to the anthranilate phosphoribosyltransferase family. In terms of assembly, homodimer. Mg(2+) serves as cofactor.

It carries out the reaction N-(5-phospho-beta-D-ribosyl)anthranilate + diphosphate = 5-phospho-alpha-D-ribose 1-diphosphate + anthranilate. It functions in the pathway amino-acid biosynthesis; L-tryptophan biosynthesis; L-tryptophan from chorismate: step 2/5. In terms of biological role, catalyzes the transfer of the phosphoribosyl group of 5-phosphorylribose-1-pyrophosphate (PRPP) to anthranilate to yield N-(5'-phosphoribosyl)-anthranilate (PRA). The polypeptide is Anthranilate phosphoribosyltransferase (Geobacillus stearothermophilus (Bacillus stearothermophilus)).